The primary structure comprises 421 residues: Testin (421 aa).

Positions 92–199 (MILTNPVAAK…GDVKLPYEMG (108 aa)) constitute a PET domain. The segment at 133–164 (EKQPVAGSEGAQYRKKQLAKQLPAHDQDPSKC) is disordered. Over residues 155 to 164 (PAHDQDPSKC) the composition is skewed to basic and acidic residues. LIM zinc-binding domains are found at residues 234–297 (YFCY…CDSE), 299–359 (PRCA…NHAV), and 362–421 (QGCH…KMMS).

Belongs to the prickle / espinas / testin family. In terms of assembly, interacts via LIM domain 1 with ZYX. Interacts (via LIM domain 3) with ENAH and VASP. Interacts with ALKBH4, talin, actin, alpha-actinin, GRIP1 and PXN. Interacts (via LIM domain 2) with ACTL7A (via N-terminus). Heterodimer with ACTL7A; the heterodimer interacts with ENAH to form a heterotrimer.

The protein resides in the cytoplasm. It is found in the cell junction. The protein localises to the focal adhesion. Its function is as follows. Scaffold protein that may play a role in cell adhesion, cell spreading and in the reorganization of the actin cytoskeleton. Plays a role in the regulation of cell proliferation. May act as a tumor suppressor. The protein is Testin (TES) of Oryctolagus cuniculus (Rabbit).